The following is a 146-amino-acid chain: D-aminoacyl-tRNA deacylase (146 aa).

The Gly-cisPro motif, important for rejection of L-amino acids motif lies at 137-138 (GP).

It belongs to the DTD family. In terms of assembly, homodimer.

The protein localises to the cytoplasm. It catalyses the reaction glycyl-tRNA(Ala) + H2O = tRNA(Ala) + glycine + H(+). The enzyme catalyses a D-aminoacyl-tRNA + H2O = a tRNA + a D-alpha-amino acid + H(+). In terms of biological role, an aminoacyl-tRNA editing enzyme that deacylates mischarged D-aminoacyl-tRNAs. Also deacylates mischarged glycyl-tRNA(Ala), protecting cells against glycine mischarging by AlaRS. Acts via tRNA-based rather than protein-based catalysis; rejects L-amino acids rather than detecting D-amino acids in the active site. By recycling D-aminoacyl-tRNA to D-amino acids and free tRNA molecules, this enzyme counteracts the toxicity associated with the formation of D-aminoacyl-tRNA entities in vivo and helps enforce protein L-homochirality. The polypeptide is D-aminoacyl-tRNA deacylase (Desulfatibacillum aliphaticivorans).